The sequence spans 126 residues: Protein ApaG (126 aa).

The region spanning 2-126 is the ApaG domain; that stretch reads SFPIDSIKIK…FRLAMPGVMQ (125 aa).

This chain is Protein ApaG, found in Shewanella denitrificans (strain OS217 / ATCC BAA-1090 / DSM 15013).